The chain runs to 196 residues: Peptidyl-tRNA hydrolase (196 aa).

Residue Tyr18 participates in tRNA binding. His23 functions as the Proton acceptor in the catalytic mechanism. Residues Phe69, Asn71, and Asn117 each contribute to the tRNA site.

This sequence belongs to the PTH family. In terms of assembly, monomer.

It is found in the cytoplasm. The catalysed reaction is an N-acyl-L-alpha-aminoacyl-tRNA + H2O = an N-acyl-L-amino acid + a tRNA + H(+). Functionally, hydrolyzes ribosome-free peptidyl-tRNAs (with 1 or more amino acids incorporated), which drop off the ribosome during protein synthesis, or as a result of ribosome stalling. In terms of biological role, catalyzes the release of premature peptidyl moieties from peptidyl-tRNA molecules trapped in stalled 50S ribosomal subunits, and thus maintains levels of free tRNAs and 50S ribosomes. The protein is Peptidyl-tRNA hydrolase of Vibrio vulnificus (strain CMCP6).